A 449-amino-acid chain; its full sequence is Glutamyl-tRNA reductase (449 aa).

Residues 49–52 (TCNR), serine 107, 112–114 (EPQ), and glutamine 118 each bind substrate. The Nucleophile role is filled by cysteine 50. 187–192 (GAGETI) serves as a coordination point for NADP(+). The disordered stretch occupies residues 418–449 (QLVERSSEGDDSQQAGADGGAARGDRRAAGGS). The span at 440–449 (RGDRRAAGGS) shows a compositional bias: basic and acidic residues.

The protein belongs to the glutamyl-tRNA reductase family. As to quaternary structure, homodimer.

It catalyses the reaction (S)-4-amino-5-oxopentanoate + tRNA(Glu) + NADP(+) = L-glutamyl-tRNA(Glu) + NADPH + H(+). Its pathway is porphyrin-containing compound metabolism; protoporphyrin-IX biosynthesis; 5-aminolevulinate from L-glutamyl-tRNA(Glu): step 1/2. Functionally, catalyzes the NADPH-dependent reduction of glutamyl-tRNA(Glu) to glutamate 1-semialdehyde (GSA). This Halorhodospira halophila (strain DSM 244 / SL1) (Ectothiorhodospira halophila (strain DSM 244 / SL1)) protein is Glutamyl-tRNA reductase.